Reading from the N-terminus, the 587-residue chain is Serine/threonine-protein phosphatase 2A 65 kDa regulatory subunit A beta isoform (587 aa).

N-acetylserine is present on S2. HEAT repeat units follow at residues 2–42, 44–80, 81–119, 158–196, 197–235, 236–274, 275–313, 315–352, 353–391, 393–430, 432–469, 470–508, 509–547, and 549–586; these read SMID…ALGE, RTRK…YVGG, VEYA…QMRE, DMLK…TVES, AHLK…LLEP, QDCV…AVGP, EPTR…ILNP, IAIQ…VLGK, DATI…VIGI, LLSQ…QLGV, FFDD…EFGP, EWAM…VMGS, EITC…IVDQ, and VVEK…VMMS.

It belongs to the phosphatase 2A regulatory subunit A family. In terms of assembly, PP2A consists of a common heterodimeric core enzyme, composed of a 36 kDa catalytic subunit (subunit C) and a 65 kDa constant regulatory subunit (subunit A), that associates with a variety of regulatory subunits such as subunits B (the R2/B/PR55/B55, R3/B''/PR72/PR130/PR59 and R5/B'/B56 families). Interacts with B'THETA. Interacts with SRK2E/OST1. Interacts with SIC/RON3. As to expression, ubiquitous, with higher levels in roots and flowers (at protein level).

The protein resides in the cytoplasm. The protein localises to the cytosol. It is found in the nucleus. It localises to the peroxisome. The A subunit of protein phosphatase 2A serves as a scaffolding molecule to coordinate the assembly of the catalytic subunit and a variable regulatory B subunit. Involved during developmental process such as seedling and floral developments. Seems to act as a negative regulator of PP2A catalytic activity. Associates with the serine/threonine-protein phosphatase PP2A catalytic subunit C and regulatory subunit B' to positively regulates beta-oxidation of fatty acids and protoauxins in peroxisomes by dephosphorylating peroxisomal beta-oxidation-related proteins. The protein is Serine/threonine-protein phosphatase 2A 65 kDa regulatory subunit A beta isoform (PP2AA2) of Arabidopsis thaliana (Mouse-ear cress).